The chain runs to 71 residues: Translation initiation factor IF-1 (71 aa).

An S1-like domain is found at 1-71 (MAKDAIKLRA…TKGRITYRHK (71 aa)).

Belongs to the IF-1 family. Component of the 30S ribosomal translation pre-initiation complex which assembles on the 30S ribosome in the order IF-2 and IF-3, IF-1 and N-formylmethionyl-tRNA(fMet); mRNA recruitment can occur at any time during PIC assembly.

Its subcellular location is the cytoplasm. Functionally, one of the essential components for the initiation of protein synthesis. Stabilizes the binding of IF-2 and IF-3 on the 30S subunit to which N-formylmethionyl-tRNA(fMet) subsequently binds. Helps modulate mRNA selection, yielding the 30S pre-initiation complex (PIC). Upon addition of the 50S ribosomal subunit IF-1, IF-2 and IF-3 are released leaving the mature 70S translation initiation complex. The sequence is that of Translation initiation factor IF-1 from Mycoplasmopsis synoviae (strain 53) (Mycoplasma synoviae).